We begin with the raw amino-acid sequence, 138 residues long: Ribosome-binding factor A (138 aa).

Residues E112–E138 form a disordered region. Over residues E119–A131 the composition is skewed to low complexity.

Belongs to the RbfA family. As to quaternary structure, monomer. Binds 30S ribosomal subunits, but not 50S ribosomal subunits or 70S ribosomes.

The protein resides in the cytoplasm. One of several proteins that assist in the late maturation steps of the functional core of the 30S ribosomal subunit. Associates with free 30S ribosomal subunits (but not with 30S subunits that are part of 70S ribosomes or polysomes). Required for efficient processing of 16S rRNA. May interact with the 5'-terminal helix region of 16S rRNA. The chain is Ribosome-binding factor A from Anaeromyxobacter dehalogenans (strain 2CP-C).